Consider the following 355-residue polypeptide: Methylxanthine N3-demethylase NdmB (355 aa).

A Rieske domain is found at 19–131 (WHPVCTLNEF…CEVKYDIVWV (113 aa)). [2Fe-2S] cluster-binding residues include cysteine 64, histidine 66, cysteine 87, and histidine 90.

[2Fe-2S] cluster serves as cofactor.

The enzyme catalyses theobromine + NADH + O2 + H(+) = 7-methylxanthine + formaldehyde + NAD(+) + H2O. It catalyses the reaction theobromine + NADPH + O2 + H(+) = 7-methylxanthine + formaldehyde + NADP(+) + H2O. The catalysed reaction is 3-methylxanthine + NADH + O2 + H(+) = xanthine + formaldehyde + NAD(+) + H2O. It carries out the reaction 3-methylxanthine + NADPH + O2 + H(+) = xanthine + formaldehyde + NADP(+) + H2O. Its function is as follows. Involved in the caffeine degradation, which is the essential first step for assimilating the carbon and nitrogen in caffeine. Catalyzes the N3-demethylation of theobromine to produce 7-methylxanthine and formaldehyde. Also catalyzes the N3-demethylation of 3-methylxanthine, caffeine, and theophylline to xanthine, paraxanthine, and 1-methylxanthine, respectively. NADH is the preferred substrate. This chain is Methylxanthine N3-demethylase NdmB (ndmB), found in Pseudomonas putida (Arthrobacter siderocapsulatus).